We begin with the raw amino-acid sequence, 1944 residues long: uncharacterized protein (1944 aa).

Residues 908–999 form a disordered region; it reads SQNLNFLKSK…SESEEESSNG (92 aa). 2 stretches are compositionally biased toward basic and acidic residues: residues 916-929 and 939-949; these read SKQETTQRIRESAK and LSEKLNSDNHI. The span at 985–996 shows a compositional bias: acidic residues; the sequence is SDEDTSESEEES. 1293–1300 lines the ATP pocket; sequence GPPGTGKT. The disordered stretch occupies residues 1824 to 1944; the sequence is QEAHKVKKRH…PPKVEHFKRK (121 aa). Basic and acidic residues-rich tracts occupy residues 1843-1852 and 1869-1891; these read GTERDEDIPN and KVTKPRLDESSSSKQDVLNKIDE. Residues 1912 to 1922 are compositionally biased toward basic residues; the sequence is GHMKKSKKPKS.

Belongs to the DNA2/NAM7 helicase family.

The protein resides in the nucleus. This is an uncharacterized protein from Schizosaccharomyces pombe (strain 972 / ATCC 24843) (Fission yeast).